The following is a 298-amino-acid chain: ATP synthase gamma chain (298 aa).

It belongs to the ATPase gamma chain family. F-type ATPases have 2 components, CF(1) - the catalytic core - and CF(0) - the membrane proton channel. CF(1) has five subunits: alpha(3), beta(3), gamma(1), delta(1), epsilon(1). CF(0) has three main subunits: a, b and c.

Its subcellular location is the cell inner membrane. In terms of biological role, produces ATP from ADP in the presence of a proton gradient across the membrane. The gamma chain is believed to be important in regulating ATPase activity and the flow of protons through the CF(0) complex. In Granulibacter bethesdensis (strain ATCC BAA-1260 / CGDNIH1), this protein is ATP synthase gamma chain.